A 358-amino-acid chain; its full sequence is Protein Wnt-8 (358 aa).

An N-terminal signal peptide occupies residues 1 to 22 (MQNTTLFILATLLIFCPFFTAS). Cysteines 55 and 66 form a disulfide. A glycan (N-linked (GlcNAc...) asparagine) is linked at Asn-104. Intrachain disulfides connect Cys-105–Cys-113, Cys-115–Cys-133, Cys-181–Cys-195, Cys-183–Cys-190, Cys-260–Cys-298, Cys-276–Cys-291, Cys-295–Cys-337, Cys-313–Cys-328, Cys-315–Cys-325, and Cys-320–Cys-321. The O-palmitoleoyl serine moiety is linked to residue Ser-187. Residues Asn-263 and Asn-282 are each glycosylated (N-linked (GlcNAc...) asparagine).

The protein belongs to the Wnt family. As to quaternary structure, homooligomer; disulfide-linked, leading to inactivation. Interacts with the long chain of cer1. In terms of processing, palmitoleoylation is required for efficient binding to frizzled receptors. Depalmitoleoylation leads to Wnt signaling pathway inhibition. Post-translationally, proteolytic processing by tiki1 and tiki2 promotes oxidation and formation of large disulfide-bond oligomers, leading to inactivation of wnt8.

The protein resides in the secreted. Its subcellular location is the extracellular space. It localises to the extracellular matrix. Its function is as follows. Ligand for members of the frizzled family of seven transmembrane receptors. Plays a role in ventral mesodermal patterning during embryogenesis. Mimics Nieuwkoop center activity. Causes dorsal mesodermal differentiation of animal cap ectoderm when coexpressed with noggin and nuclear, sequence-specific DNA-binding protein xBra. None of these molecules causes dorsal mesoderm formation when expressed alone. The polypeptide is Protein Wnt-8 (wnt8) (Xenopus laevis (African clawed frog)).